The chain runs to 95 residues: Small ribosomal subunit protein bS20c (95 aa).

This sequence belongs to the bacterial ribosomal protein bS20 family.

It is found in the plastid. The protein localises to the cyanelle. In terms of biological role, binds directly to 16S ribosomal RNA. The sequence is that of Small ribosomal subunit protein bS20c (rps20) from Cyanophora paradoxa.